Reading from the N-terminus, the 229-residue chain is Transmembrane protein 182 (229 aa).

Positions 1–26 (MRLNIAIFFGALFGALGVLLFLVAFG) are cleaved as a signal peptide. At 27–114 (SDYWLLATEV…SYDSAVIYRG (88 aa)) the chain is on the extracellular side. Asparagine 47 carries N-linked (GlcNAc...) asparagine glycosylation. Positions 49–59 (TFHHEGFFWRC) are interaction with ITGB1. Asparagine 102 is a glycosylation site (N-linked (GlcNAc...) asparagine). The helical transmembrane segment at 115–135 (FWAVLMLLGVVAVVIASFLII) threads the bilayer. Residues 136–153 (CAAPFASHFLYKAGGGSY) are Cytoplasmic-facing. The chain crosses the membrane as a helical span at residues 154-174 (IAAGILFSLVVMLYVIWVQAV). The Extracellular segment spans residues 175 to 200 (ADMESYRNMKMKDCLDFTPSVLYGWS). Residues 201-221 (FFLAPAGIFFSLLAGLLFLVV) traverse the membrane as a helical segment. Topologically, residues 222 to 229 (GWHIQIHH) are cytoplasmic.

It belongs to the TMEM182 family. As to quaternary structure, interacts with ITGB1.

It localises to the cell membrane. Negatively regulates myogenesis and skeletal muscle regeneration via its association with ITGB1. Modulates ITGB1 activation by decreasing ITGB1-LAMB1 interaction and inhibiting ITGB1-mediated intracellular signaling during myogenesis. The protein is Transmembrane protein 182 (TMEM182) of Homo sapiens (Human).